The following is a 193-amino-acid chain: MQDFLLVLLSTALVNNVVLVKFLGLCPFMGVSRKTDAAIGMGLATTFVITVASAACWLVEALILEPLDLKFLRILSMILVIAAIVQFIETVMRKVTPDLHKALGIYLPLITTNCAVLGLPLMYIQGHLSLAMSTLSGFGASVGFTLVLVIFAGMRERLAQLSVPAAFAGTPIAFVSAGLLGLAFMGFAGLVHV.

6 helical membrane passes run 4–24 (FLLV…KFLG), 39–59 (IGMG…CWLV), 71–91 (FLRI…IETV), 102–122 (ALGI…LPLM), 134–154 (TLSG…FAGM), and 171–191 (PIAF…AGLV).

This sequence belongs to the NqrDE/RnfAE family. As to quaternary structure, the complex is composed of six subunits: RnfA, RnfB, RnfC, RnfD, RnfE and RnfG.

The protein localises to the cellular chromatophore membrane. Its function is as follows. Part of a membrane-bound complex that couples electron transfer with translocation of ions across the membrane. Required for nitrogen fixation. Involved in electron transfer to nitrogenase. The sequence is that of Ion-translocating oxidoreductase complex subunit A from Rhodobacter capsulatus (Rhodopseudomonas capsulata).